Here is a 359-residue protein sequence, read N- to C-terminus: 4-galactosyl-N-acetylglucosaminide 3-alpha-L-fucosyltransferase 9 (359 aa).

The Cytoplasmic segment spans residues 1–11; sequence MTSTSKGILRP. The chain crosses the membrane as a helical; Signal-anchor for type II membrane protein span at residues 12–32; that stretch reads FLIVCIILGCFMACLLIYIKP. Topologically, residues 33 to 359 are lumenal; it reads TNSWIFSPME…VGNLEKWFWN (327 aa). An N-linked (GlcNAc...) asparagine glycan is attached at N62. Residues 63–168 are acceptor-binding; that stretch reads ETTILVWVWP…RRDSDIQVPY (106 aa). Q75 provides a ligand contact to a beta-D-galactosyl-(1-&gt;4)-N-acetyl-beta-D-glucosaminyl derivative. Disulfide bonds link C82-C335, C91-C338, and C190-C238. N101 is a glycosylation site (N-linked (GlcNAc...) asparagine). Residue E137 coordinates a beta-D-galactosyl-(1-&gt;4)-N-acetyl-beta-D-glucosaminyl derivative. E137 acts as the Nucleophile in catalysis. E137 lines the GDP-beta-L-fucose pocket. N153 carries an N-linked (GlcNAc...) asparagine glycan. GDP-beta-L-fucose-binding residues include Y168, V192, S194, N195, R202, V226, Y241, N246, Y252, E255, and K256. Residues 169-326 form a donor-binding region; the sequence is GFLTVSTNPF…NWRKDFTVNL (158 aa). The interval 327 to 359 is acceptor-binding; that stretch reads PRFWESHACLACDHVKRHQEYKSVGNLEKWFWN.

It belongs to the glycosyltransferase 10 family. As to quaternary structure, homodimer. N-glycosylated with complex-type N-glycans. The glycan alpha-D-Man-(1-&gt;3)-beta-D-Man-(1-&gt;4)-GlcNAc-(1-&gt;4)-GlcNAc is attached at Asn-153. In terms of tissue distribution, strongly expressed in forebrain and stomach, lower expression in spleen and peripheral blood leukocytes, and no expression in small intestine, colon, liver, lung, kidney, adrenal cortex or uterus. Highly expressed in granulocytes. Not expressed in monocytes.

It localises to the golgi apparatus. The protein localises to the trans-Golgi network membrane. It is found in the golgi apparatus membrane. It catalyses the reaction a beta-D-galactosyl-(1-&gt;4)-N-acetyl-beta-D-glucosaminyl derivative + GDP-beta-L-fucose = a beta-D-galactosyl-(1-&gt;4)-[alpha-L-fucosyl-(1-&gt;3)]-N-acetyl-beta-D-glucosaminyl derivative + GDP + H(+). The enzyme catalyses an alpha-Neu5Ac-(2-&gt;3)-beta-D-Gal-(1-&gt;4)-beta-D-GlcNAc-(1-&gt;3)-beta-D-Gal-(1-&gt;4)-beta-D-GlcNAc derivative + GDP-beta-L-fucose = an alpha-Neu5Ac-(2-&gt;3)-beta-D-Gal-(1-&gt;4)-beta-D-GlcNAc-(1-&gt;3)-beta-D-Gal-(1-&gt;4)-[alpha-L-Fuc-(1-&gt;3)]-beta-D-GlcNAc derivative + GDP + H(+). It carries out the reaction alpha-N-glycoloylneuraminosyl-(2-&gt;3)-beta-D-galactosyl-(1-&gt;4)-N-acetyl-beta-D-glucosaminyl-(1-&gt;3)-beta-D-galactosyl-(1-&gt;4)-N-acetyl-beta-D-glucosaminyl-(1-&gt;3)-beta-D-galactosyl-(1-&gt;4)-beta-D-glucosyl-(1&lt;-&gt;1')-ceramide + GDP-beta-L-fucose = alpha-N-glycoloylneuraminosyl-(2-&gt;3)-beta-D-galactosyl-(1-&gt;4)-N-acetyl-beta-D-glucosaminyl-(1-&gt;3)-beta-D-galactosyl-(1-&gt;4)-[alpha-L-fucosyl-(1-&gt;3)]-N-acetyl-beta-D-glucosaminyl-(1-&gt;3)-beta-D-galactosyl-(1-&gt;4)-beta-D-glucosyl-(1&lt;-&gt;1')-ceramide + GDP + H(+). The catalysed reaction is alpha-D-galactosyl-(1-&gt;3)-beta-D-galactosyl-(1-&gt;4)-N-acetyl-beta-D-glucosaminyl-(1-&gt;3)-beta-D-galactosyl-(1-&gt;4)-beta-D-glucosyl-(1&lt;-&gt;1')-ceramide + GDP-beta-L-fucose = a neolactoside IV(3)-alpha-Gal,III(3)-alpha-Fuc-nLc4Cer + GDP + H(+). It catalyses the reaction a neolactoside nLc4Cer + GDP-beta-L-fucose = a neolactoside III(3)-alpha-Fuc-nLc4Cer + GDP + H(+). The enzyme catalyses an N-acetyl-alpha-neuraminyl-(2-&gt;3)-beta-D-galactosyl-(1-&gt;4)-N-acetyl-beta-D-glucosaminyl derivative + GDP-beta-L-fucose = an alpha-Neu5Ac-(2-&gt;3)-beta-D-Gal-(1-&gt;4)-[alpha-L-Fuc-(1-&gt;3)]-beta-D-GlcNAc derivative + GDP + H(+). It carries out the reaction beta-D-Gal-(1-&gt;4)-beta-D-GlcNAc-(1-&gt;3)-beta-D-Gal-(1-&gt;4)-D-Glc + GDP-beta-L-fucose = beta-D-Gal-(1-&gt;4)-[alpha-L-Fuc-(1-&gt;3)]-beta-D-GlcNAc-(1-&gt;3)-beta-D-Gal-(1-&gt;4)-D-Glc + GDP + H(+). The catalysed reaction is an alpha-L-Fuc-(1-&gt;2)-beta-D-Gal-(1-&gt;4)-beta-D-GlcNAc derivative + GDP-beta-L-fucose = an alpha-L-Fuc-(1-&gt;2)-beta-D-Gal-(1-&gt;4)-[alpha-L-Fuc-(1-&gt;3)]-beta-D-GlcNAc derivative + GDP + H(+). The protein operates within protein modification; protein glycosylation. It functions in the pathway glycolipid biosynthesis. Its activity is regulated as follows. Activated by Mn2+. Functionally, catalyzes alpha(1-&gt;3) linkage of fucosyl moiety transferred from GDP-beta-L-fucose to N-acetyl glucosamine (GlcNAc) within type 2 lactosamine (LacNAc, beta-D-Gal-(1-&gt;4)-beta-D-GlcNAc-) glycan attached to glycolipids and N- or O-linked glycoproteins. Fucosylates distal type 2 LacNAc and its fucosylated (H-type 2 LacNAc) and sialylated (sialyl-type 2 LacNAc) derivatives to form Lewis x (Lex) (CD15) and Lewis y (Ley) antigenic epitopes involved in cell adhesion and differentiation. Generates Lex epitopes in the brain, presumably playing a role in the maintenance of neuronal stemness and neurite outgrowth in progenitor neural cells. Fucosylates the internal type 2 LacNAc unit of the polylactosamine chain to form VIM-2 antigen that serves as recognition epitope for SELE. Can also modify milk oligosaccharides, in particular type 2 tetrasaccharide LNnT. This chain is 4-galactosyl-N-acetylglucosaminide 3-alpha-L-fucosyltransferase 9, found in Homo sapiens (Human).